The following is a 315-amino-acid chain: Outer membrane protease OmpP (315 aa).

Residues 1–23 form the signal peptide; sequence MQTKLLAIMLAAPVVFSSQEASA. Catalysis depends on residues Asp103, Asp105, Asp230, and His232.

This sequence belongs to the peptidase A26 family.

The protein resides in the cell outer membrane. Its function is as follows. Protease; also acts as a receptor for bacteriophage Ox2. The sequence is that of Outer membrane protease OmpP (ompP) from Escherichia coli (strain K12).